A 533-amino-acid chain; its full sequence is Probable protein kinase UbiB (533 aa).

The helical transmembrane segment at 24–44 (LILELPMLPWWLRLLGAALPW) threads the bilayer. One can recognise a Protein kinase domain in the interval 126–494 (RFEREPLASA…WKSSRHDWLG (369 aa)). ATP-binding positions include 132 to 140 (LASASVAQV) and Lys154. Residue Asp289 is the Proton acceptor of the active site. Residues 510 to 530 (LGQQLEAWPAWVMLAGGVFLI) form a helical membrane-spanning segment.

This sequence belongs to the ABC1 family. UbiB subfamily.

Its subcellular location is the cell inner membrane. The protein operates within cofactor biosynthesis; ubiquinone biosynthesis [regulation]. Its function is as follows. Is probably a protein kinase regulator of UbiI activity which is involved in aerobic coenzyme Q (ubiquinone) biosynthesis. The sequence is that of Probable protein kinase UbiB from Pseudomonas paraeruginosa (strain DSM 24068 / PA7) (Pseudomonas aeruginosa (strain PA7)).